A 312-amino-acid chain; its full sequence is MKVAVLGAAGGIGQALALLLKNQLPSGSELSLYDIAPVTPGVAVDLSHIPTAVKIKGFSGEDATPALEGADVVLISAGVARKPGMDRSDLFNVNAGIVKNLVQQIAKTCPKACVGIITNPVNTTVAIAAEVLKKAGVYDKNKLFGVTTLDIIRSNTFVAELKGKLPTEVEVPVIGGHSGVTILPLLSQIPGVSFTEQEAAELTKRIQNAGTEVVEAKAGGGSATLSMGQAAARFGLSLVRALQGEKGVVECAYVEGDGQYARFFSQPLLLGKNGVEERKSIGTLSAFEQHSLDAMLDTLKKDIQLGEDFINK.

Residues 7–13 (GAAGGIG) and aspartate 34 each bind NAD(+). Positions 81 and 87 each coordinate substrate. NAD(+) is bound by residues asparagine 94 and 117–119 (ITN). Residues asparagine 119 and arginine 153 each coordinate substrate. Histidine 177 functions as the Proton acceptor in the catalytic mechanism. NAD(+) is bound at residue methionine 227.

This sequence belongs to the LDH/MDH superfamily. MDH type 1 family. As to quaternary structure, homodimer.

The catalysed reaction is (S)-malate + NAD(+) = oxaloacetate + NADH + H(+). Its function is as follows. Catalyzes the reversible oxidation of malate to oxaloacetate. The protein is Malate dehydrogenase of Salmonella agona (strain SL483).